The chain runs to 394 residues: Dimethyladenosine transferase 2, mitochondrial (394 aa).

A mitochondrion-targeting transit peptide spans 1–19; that stretch reads MWVPGAGIPSRLTLSAFTR. 3 residues coordinate S-adenosyl-L-methionine: Val75, Glu123, and Asp149. Residues 326–327 form a DNA-binding region; sequence KR.

It belongs to the class I-like SAM-binding methyltransferase superfamily. rRNA adenine N(6)-methyltransferase family. KsgA subfamily. In terms of assembly, homodimer. Component of the mitochondrial transcription initiation complex, composed at least of TFB2M, TFAM and POLRMT. In this complex TFAM recruits POLRMT to the promoter whereas TFB2M induces structural changes in POLRMT to enable promoter opening and trapping of the DNA non-template strand. Interacts with mitochondrial RNA polymerase POLRMT. Interacts with TFAM.

It is found in the mitochondrion. The catalysed reaction is adenosine in rRNA + S-adenosyl-L-methionine = N(6)-methyladenosine in rRNA + S-adenosyl-L-homocysteine + H(+). In terms of biological role, S-adenosyl-L-methionine-dependent rRNA methyltransferase which may methylate two specific adjacent adenosines in the loop of a conserved hairpin near the 3'-end of 12S mitochondrial rRNA. Component of the mitochondrial transcription initiation complex, composed at least of TFB2M, TFAM and POLRMT that is required for basal transcription of mitochondrial DNA. In this complex TFAM recruits POLRMT to a specific promoter whereas TFB2M induces structural changes in POLRMT to enable promoter opening and trapping of the DNA non-template strand. Stimulates transcription independently of the methyltransferase activity. This chain is Dimethyladenosine transferase 2, mitochondrial, found in Bos taurus (Bovine).